The chain runs to 593 residues: Translation initiation factor IF-2 (593 aa).

Residues 101-270 (LRPPVVTIMG…LLIAELEDLR (170 aa)) enclose the tr-type G domain. Residues 110–117 (GHVDHGKT) are G1. Position 110–117 (110–117 (GHVDHGKT)) interacts with GTP. The G2 stretch occupies residues 135 to 139 (GITQH). Positions 156–159 (DTPG) are G3. Residues 156 to 160 (DTPGH) and 210 to 213 (NKMD) contribute to the GTP site. The segment at 210 to 213 (NKMD) is G4. Residues 246–248 (SAR) are G5.

It belongs to the TRAFAC class translation factor GTPase superfamily. Classic translation factor GTPase family. IF-2 subfamily.

It is found in the cytoplasm. In terms of biological role, one of the essential components for the initiation of protein synthesis. Protects formylmethionyl-tRNA from spontaneous hydrolysis and promotes its binding to the 30S ribosomal subunits. Also involved in the hydrolysis of GTP during the formation of the 70S ribosomal complex. The chain is Translation initiation factor IF-2 from Dehalococcoides mccartyi (strain CBDB1).